The sequence spans 249 residues: tRNA (guanine-N(1)-)-methyltransferase (249 aa).

Residues Gly-116 and 136–141 each bind S-adenosyl-L-methionine; that span reads IGDYIL.

It belongs to the RNA methyltransferase TrmD family. As to quaternary structure, homodimer.

The protein resides in the cytoplasm. The catalysed reaction is guanosine(37) in tRNA + S-adenosyl-L-methionine = N(1)-methylguanosine(37) in tRNA + S-adenosyl-L-homocysteine + H(+). In terms of biological role, specifically methylates guanosine-37 in various tRNAs. The polypeptide is tRNA (guanine-N(1)-)-methyltransferase (Zymomonas mobilis subsp. mobilis (strain ATCC 31821 / ZM4 / CP4)).